A 908-amino-acid polypeptide reads, in one-letter code: 5'-3' exoribonuclease 2 homolog (908 aa).

The CCHC-type zinc finger occupies 263–280 (RPCDICNGFGHEMDKCVG). 2 disordered regions span residues 409–457 (RQRR…VGNY) and 821–908 (GGNQ…YRRF). Polar residues predominate over residues 432 to 454 (HGSLNQSAFGASAVGPNSQQRSV). A Phosphoserine modification is found at serine 438. Composition is skewed to low complexity over residues 825-868 (GQSY…HNQR) and 878-908 (QRNF…YRRF).

This sequence belongs to the 5'-3' exonuclease family. XRN2/RAT1 subfamily. As to quaternary structure, interacts with cuff and Rai1; the interaction with cuff may inhibit its role in RNA degradation.

The protein resides in the nucleus. Its function is as follows. A 5'-3' exoribonuclease. May promote the termination of transcription by RNA polymerase II and promote RNA degradation. Involved in turnover of piRNA precursors. This is 5'-3' exoribonuclease 2 homolog from Drosophila melanogaster (Fruit fly).